The chain runs to 437 residues: Trigger factor (437 aa).

In terms of domain architecture, PPIase FKBP-type spans 161 to 246 (DDQVNIDFVG…VNSVSAPVLP (86 aa)).

This sequence belongs to the FKBP-type PPIase family. Tig subfamily.

The protein resides in the cytoplasm. It carries out the reaction [protein]-peptidylproline (omega=180) = [protein]-peptidylproline (omega=0). Functionally, involved in protein export. Acts as a chaperone by maintaining the newly synthesized protein in an open conformation. Functions as a peptidyl-prolyl cis-trans isomerase. The sequence is that of Trigger factor from Pseudomonas putida (strain GB-1).